Here is a 91-residue protein sequence, read N- to C-terminus: RNA-binding protein Hfq (91 aa).

The 60-residue stretch at 9-68 folds into the Sm domain; the sequence is DPFLNALRRERVPVSIYLVNGIKLQGQVESFDQFVILLKNTVSQMVYKHAISTVVPSRPF. Positions 66 to 91 are disordered; it reads RPFNVGSHQGGSSNYNAQQDDSAGEQ. Over residues 71 to 91 the composition is skewed to polar residues; the sequence is GSHQGGSSNYNAQQDDSAGEQ.

Belongs to the Hfq family. Homohexamer.

RNA chaperone that binds small regulatory RNA (sRNAs) and mRNAs to facilitate mRNA translational regulation in response to envelope stress, environmental stress and changes in metabolite concentrations. Also binds with high specificity to tRNAs. This Shewanella amazonensis (strain ATCC BAA-1098 / SB2B) protein is RNA-binding protein Hfq.